The chain runs to 99 residues: Malonate decarboxylase acyl carrier protein (99 aa).

Serine 25 is subject to O-(phosphoribosyl dephospho-coenzyme A)serine.

The protein belongs to the MdcC family. In terms of processing, covalently binds the prosthetic group of malonate decarboxylase.

The protein resides in the cytoplasm. In terms of biological role, subunit of malonate decarboxylase, it is an acyl carrier protein to which acetyl and malonyl thioester residues are bound via a 2'-(5''-phosphoribosyl)-3'-dephospho-CoA prosthetic group and turn over during the catalytic mechanism. The chain is Malonate decarboxylase acyl carrier protein from Pseudomonas syringae pv. syringae (strain B728a).